We begin with the raw amino-acid sequence, 63 residues long: Large ribosomal subunit protein uL30 (63 aa).

This sequence belongs to the universal ribosomal protein uL30 family. Part of the 50S ribosomal subunit.

This chain is Large ribosomal subunit protein uL30, found in Xanthomonas axonopodis pv. citri (strain 306).